The primary structure comprises 432 residues: Phosphomethylpyrimidine synthase (432 aa).

Residues asparagine 66, methionine 95, tyrosine 124, histidine 163, 185–187 (SRG), 226–229 (DGLR), and glutamate 265 each bind substrate. Histidine 269 is a binding site for Zn(2+). Position 292 (tyrosine 292) interacts with substrate. Residue histidine 333 coordinates Zn(2+). Residues cysteine 409, cysteine 412, and cysteine 416 each coordinate [4Fe-4S] cluster.

The protein belongs to the ThiC family. The cofactor is [4Fe-4S] cluster.

It carries out the reaction 5-amino-1-(5-phospho-beta-D-ribosyl)imidazole + S-adenosyl-L-methionine = 4-amino-2-methyl-5-(phosphooxymethyl)pyrimidine + CO + 5'-deoxyadenosine + formate + L-methionine + 3 H(+). Its pathway is cofactor biosynthesis; thiamine diphosphate biosynthesis. Functionally, catalyzes the synthesis of the hydroxymethylpyrimidine phosphate (HMP-P) moiety of thiamine from aminoimidazole ribotide (AIR) in a radical S-adenosyl-L-methionine (SAM)-dependent reaction. The polypeptide is Phosphomethylpyrimidine synthase (Thermoanaerobacter sp. (strain X514)).